The primary structure comprises 1160 residues: Nonribosomal peptide synthetase fmqC (1160 aa).

Positions 132–520 (TYRELNDRSS…LGEVEHALQQ (389 aa)) are adenylation. Residues 642–719 (QPVTQLEESL…EMAGMLDGVT (78 aa)) form the Carrier domain. Serine 679 bears the O-(pantetheine 4'-phosphoryl)serine mark. The segment at 749–1025 (CTLEDLQEGF…CAAAETPMRI (277 aa)) is condensation.

It belongs to the NRP synthetase family. In terms of assembly, interacts with the mitogen-activated protein kinase mpkA. Phosphorylated by mpkA during conidiogenesis.

The protein resides in the cytoplasm. Its pathway is alkaloid biosynthesis. Nonribosomal peptide synthetase; part of the gene cluster that mediates the biosynthesis of the antitumor fumiquinazolines that confer a dual-usage capability to defend against phagocytes in the environment and animal hosts. The simplest member is fumiquinazoline F (FQF) with a 6-6-6 tricyclic core derived from anthranilic acid (Ant), tryptophan (Trp), and alanine (Ala). The trimodular NRPS fmqA is responsible for FQF formation. Modules 1, 2 and 3 of fmqA are predicted to activate and load Ant, Trp and Ala, respectively, providing for the assembly of an Ant-Trp-Ala-S-enzyme intermediate that would undergo double cyclization for chain release and generation of the tricyclic 6-6-6 product fumiquinazoline F. The presence of an E domain predicted for module 2 of fmqA is consistent with epimerization of L-Trp to D-Trp during assembly to generate the R-stereocenter at C14 of FQF. The FAD-dependent monooxygenase fmqB and the monomodular NRPS fmqC then maturate FQF to FQA. FmqB oxidizes the 2',3'-double bond of the indole side chain of FQF, and fmqC activates L-Ala as the adenylate, installs it as the pantetheinyl thioester on its carrier protein domain, and acylates the oxidized indole for subsequent intramolecular cyclization to create the 6-5-5-imidazolindolone of FQA. The FAD-linked oxidoreductase fmqD introduces a third layer of scaffold complexity by converting FQA to the spirohemiaminal FQC, presumably by catalyzing the formation of a transient imine within the pyrazinone ring. FQC subsequently converts nonenzymatically to the known cyclic aminal FQD. The polypeptide is Nonribosomal peptide synthetase fmqC (Aspergillus fumigatus (strain ATCC MYA-4609 / CBS 101355 / FGSC A1100 / Af293) (Neosartorya fumigata)).